A 465-amino-acid chain; its full sequence is UDP-N-acetylmuramate--L-alanine ligase (465 aa).

112–118 (GTHGKTT) lines the ATP pocket.

Belongs to the MurCDEF family.

It localises to the cytoplasm. The enzyme catalyses UDP-N-acetyl-alpha-D-muramate + L-alanine + ATP = UDP-N-acetyl-alpha-D-muramoyl-L-alanine + ADP + phosphate + H(+). The protein operates within cell wall biogenesis; peptidoglycan biosynthesis. In terms of biological role, cell wall formation. The chain is UDP-N-acetylmuramate--L-alanine ligase from Burkholderia cenocepacia (strain ATCC BAA-245 / DSM 16553 / LMG 16656 / NCTC 13227 / J2315 / CF5610) (Burkholderia cepacia (strain J2315)).